A 347-amino-acid polypeptide reads, in one-letter code: S-adenosylmethionine:tRNA ribosyltransferase-isomerase (347 aa).

It belongs to the QueA family. In terms of assembly, monomer.

Its subcellular location is the cytoplasm. The catalysed reaction is 7-aminomethyl-7-carbaguanosine(34) in tRNA + S-adenosyl-L-methionine = epoxyqueuosine(34) in tRNA + adenine + L-methionine + 2 H(+). It participates in tRNA modification; tRNA-queuosine biosynthesis. In terms of biological role, transfers and isomerizes the ribose moiety from AdoMet to the 7-aminomethyl group of 7-deazaguanine (preQ1-tRNA) to give epoxyqueuosine (oQ-tRNA). The polypeptide is S-adenosylmethionine:tRNA ribosyltransferase-isomerase (Streptococcus thermophilus (strain CNRZ 1066)).